The chain runs to 285 residues: RING finger protein 223 (285 aa).

The segment at 81–132 (CSICFSGYDNIFKTPKELSCSHVFCLECLARLAAAQPAGRSGREAVPCPFCR) adopts an RING-type zinc-finger fold. Residues 230-250 (VALVSVLLLVLFCVILWPVQC) traverse the membrane as a helical segment.

The protein resides in the membrane. The chain is RING finger protein 223 (Rnf223) from Mus musculus (Mouse).